The sequence spans 164 residues: SsrA-binding protein (164 aa).

Belongs to the SmpB family.

The protein localises to the cytoplasm. Functionally, required for rescue of stalled ribosomes mediated by trans-translation. Binds to transfer-messenger RNA (tmRNA), required for stable association of tmRNA with ribosomes. tmRNA and SmpB together mimic tRNA shape, replacing the anticodon stem-loop with SmpB. tmRNA is encoded by the ssrA gene; the 2 termini fold to resemble tRNA(Ala) and it encodes a 'tag peptide', a short internal open reading frame. During trans-translation Ala-aminoacylated tmRNA acts like a tRNA, entering the A-site of stalled ribosomes, displacing the stalled mRNA. The ribosome then switches to translate the ORF on the tmRNA; the nascent peptide is terminated with the 'tag peptide' encoded by the tmRNA and targeted for degradation. The ribosome is freed to recommence translation, which seems to be the essential function of trans-translation. The chain is SsrA-binding protein from Corynebacterium efficiens (strain DSM 44549 / YS-314 / AJ 12310 / JCM 11189 / NBRC 100395).